Consider the following 1415-residue polypeptide: Bridge-like lipid transfer protein family member 3B (1415 aa).

Residues 3–94 (GLIKKQILKH…DKVIMEMSTC (92 aa)) enclose the Chorein N-terminal domain. Disordered regions lie at residues 267–300 (STEQ…STTP) and 882–904 (KSPL…SEGV). A compositionally biased stretch (polar residues) spans 275 to 300 (ASETTQSPTPPVSSQQVKNPQTSTTP). Residues 1367–1404 (KAAGISKEQLVEENECLKQELAKTKMALAESHMERDRL) are a coiled coil.

Its subcellular location is the cytoplasm. It localises to the cytosol. It is found in the early endosome. Functionally, tube-forming lipid transport protein which mediates the transfer of lipids between membranes at organelle contact sites. Required for retrograde traffic of vesicle clusters in the early endocytic pathway to the Golgi complex. The protein is Bridge-like lipid transfer protein family member 3B (bltp3b) of Xenopus laevis (African clawed frog).